We begin with the raw amino-acid sequence, 177 residues long: MSRVAKAPVALPNGVSVTLNGQQVEVKGSKGTMSLHLHDLVELKQEDSQLILSPVSDSKEAWMHTGTMRSTLNNFVIGVSEGFERKLQLIGVGYRAQVAGNKITLNVGYSHPVEYILPEGVTAETPSQTEIILKSNDKQALGQAAAKIRGYRPPEPYKGKGIRYSDEHVVRKEAKKK.

Positions Tyr-151–Lys-177 are disordered. The segment covering Glu-155–Lys-177 has biased composition (basic and acidic residues).

This sequence belongs to the universal ribosomal protein uL6 family. Part of the 50S ribosomal subunit.

Functionally, this protein binds to the 23S rRNA, and is important in its secondary structure. It is located near the subunit interface in the base of the L7/L12 stalk, and near the tRNA binding site of the peptidyltransferase center. The sequence is that of Large ribosomal subunit protein uL6 from Psychrobacter sp. (strain PRwf-1).